We begin with the raw amino-acid sequence, 156 residues long: 2-C-methyl-D-erythritol 2,4-cyclodiphosphate synthase (156 aa).

The a divalent metal cation site is built by Asp9 and His11. Residues Asp9–His11 and His36–Ser37 each bind 4-CDP-2-C-methyl-D-erythritol 2-phosphate. His44 provides a ligand contact to a divalent metal cation. Asn58–Gly60 is a 4-CDP-2-C-methyl-D-erythritol 2-phosphate binding site.

Belongs to the IspF family. Homotrimer. A divalent metal cation serves as cofactor.

The enzyme catalyses 4-CDP-2-C-methyl-D-erythritol 2-phosphate = 2-C-methyl-D-erythritol 2,4-cyclic diphosphate + CMP. It participates in isoprenoid biosynthesis; isopentenyl diphosphate biosynthesis via DXP pathway; isopentenyl diphosphate from 1-deoxy-D-xylulose 5-phosphate: step 4/6. Involved in the biosynthesis of isopentenyl diphosphate (IPP) and dimethylallyl diphosphate (DMAPP), two major building blocks of isoprenoid compounds. Catalyzes the conversion of 4-diphosphocytidyl-2-C-methyl-D-erythritol 2-phosphate (CDP-ME2P) to 2-C-methyl-D-erythritol 2,4-cyclodiphosphate (ME-CPP) with a corresponding release of cytidine 5-monophosphate (CMP). The protein is 2-C-methyl-D-erythritol 2,4-cyclodiphosphate synthase of Kosmotoga olearia (strain ATCC BAA-1733 / DSM 21960 / TBF 19.5.1).